The primary structure comprises 144 residues: Acylphosphatase-like protein MJ1331 (144 aa).

The 93-residue stretch at 8 to 100 (TYELRIYGNV…FPNGLNKIST (93 aa)) folds into the Acylphosphatase-like domain.

This is Acylphosphatase-like protein MJ1331 from Methanocaldococcus jannaschii (strain ATCC 43067 / DSM 2661 / JAL-1 / JCM 10045 / NBRC 100440) (Methanococcus jannaschii).